A 311-amino-acid chain; its full sequence is Zeta-sarcoglycan (311 aa).

Topologically, residues 1 to 50 are cytoplasmic; sequence MDRSTDLDIQELKMTREQYILATQQNNLPRPENAQLYPVGIYGWRKRCLY. A helical; Signal-anchor for type II membrane protein transmembrane segment spans residues 51-71; sequence FFVLLLLVTMIVNLAMTIWIL. The Extracellular segment spans residues 72–311; sequence KVMNFTVDGM…QSSSSICLWN (240 aa). 2 N-linked (GlcNAc...) asparagine glycosylation sites follow: asparagine 75 and asparagine 123. Cysteines 285 and 301 form a disulfide.

Belongs to the sarcoglycan beta/delta/gamma/zeta family. In terms of tissue distribution, expressed in the heart, skeletal muscle and arterial vascular smooth muscle.

It is found in the cell membrane. It localises to the sarcolemma. The protein resides in the cytoplasm. Its subcellular location is the cytoskeleton. Component of the sarcoglycan complex, a subcomplex of the dystrophin-glycoprotein complex which forms a link between the F-actin cytoskeleton and the extracellular matrix. May play a role in the maintenance of striated muscle membrane stability. The chain is Zeta-sarcoglycan (Sgcz) from Mus musculus (Mouse).